The following is a 76-amino-acid chain: Toxin Acra III-1 (76 aa).

The region spanning 4-67 (PGNYPLDTRG…IWDAVKNHCT (64 aa)) is the LCN-type CS-alpha/beta domain. 3 disulfides stabilise this stretch: Cys18–Cys41, Cys27–Cys46, and Cys31–Cys48.

Belongs to the long (3 C-C) scorpion toxin superfamily. Sodium channel inhibitor family. Beta subfamily. As to expression, expressed by the venom gland.

The protein resides in the secreted. Binds to sodium channels (Nav) and affects the channel activation process. The sequence is that of Toxin Acra III-1 from Androctonus crassicauda (Arabian fat-tailed scorpion).